Consider the following 185-residue polypeptide: Ribulose bisphosphate carboxylase small subunit, chloroplastic 2 (185 aa).

The N-terminal 45 residues, 1–45, are a transit peptide targeting the chloroplast; that stretch reads MAAVIAKSSVSAAVARPARSSVRPMAALKPAVKAAPVAAPAQANQ. Methionine 46 carries the N-methylmethionine modification.

This sequence belongs to the RuBisCO small chain family. As to quaternary structure, heterohexadecamer of 8 large and 8 small subunits.

It is found in the plastid. Its subcellular location is the chloroplast. The protein resides in the chloroplast stroma. Functionally, ruBisCO catalyzes two reactions: the carboxylation of D-ribulose 1,5-bisphosphate, the primary event in carbon dioxide fixation, as well as the oxidative fragmentation of the pentose substrate. Both reactions occur simultaneously and in competition at the same active site. Although the small subunit is not catalytic it is essential for maximal activity. This is Ribulose bisphosphate carboxylase small subunit, chloroplastic 2 from Chlamydomonas reinhardtii (Chlamydomonas smithii).